Reading from the N-terminus, the 122-residue chain is Large ribosomal subunit protein uL14 (122 aa).

It belongs to the universal ribosomal protein uL14 family. In terms of assembly, part of the 50S ribosomal subunit. Forms a cluster with proteins L3 and L19. In the 70S ribosome, L14 and L19 interact and together make contacts with the 16S rRNA in bridges B5 and B8.

In terms of biological role, binds to 23S rRNA. Forms part of two intersubunit bridges in the 70S ribosome. The protein is Large ribosomal subunit protein uL14 of Shewanella loihica (strain ATCC BAA-1088 / PV-4).